A 237-amino-acid chain; its full sequence is Uridylate kinase (237 aa).

ATP is bound at residue 12–15; it reads KLSG. Positions 20-25 are involved in allosteric activation by GTP; it reads GDEGFG. Gly54 is a UMP binding site. ATP contacts are provided by Gly55 and Arg59. UMP contacts are provided by residues Asp74 and 135-142; that span reads TGSPFFTT. ATP is bound by residues Thr162, Tyr168, and Asp171.

Belongs to the UMP kinase family. In terms of assembly, homohexamer.

Its subcellular location is the cytoplasm. It carries out the reaction UMP + ATP = UDP + ADP. It functions in the pathway pyrimidine metabolism; CTP biosynthesis via de novo pathway; UDP from UMP (UMPK route): step 1/1. Allosterically activated by GTP. Inhibited by UTP. Its function is as follows. Catalyzes the reversible phosphorylation of UMP to UDP. The sequence is that of Uridylate kinase from Haemophilus ducreyi (strain 35000HP / ATCC 700724).